A 262-amino-acid polypeptide reads, in one-letter code: Virulence regulon transcriptional activator VirF (262 aa).

The HTH araC/xylS-type domain occupies 161–258 (DQIRKIVEKN…GITPKKFYLY (98 aa)). 2 consecutive DNA-binding regions (H-T-H motif) follow at residues 178–199 (SDISNNLNLSEIAVRKRLESEK) and 225–248 (INDVSRLIGISSPSYFIRKFNEYY).

As to quaternary structure, homodimer.

Its function is as follows. Primary regulator of plasmid-encoded virulence genes. Activates the transcription of icsA (virG) and of virB, which is an activator of the ipaABCD virulence regulon. In Shigella dysenteriae, this protein is Virulence regulon transcriptional activator VirF (virF).